Here is a 44-residue protein sequence, read N- to C-terminus: Photosystem I reaction center subunit IX (44 aa).

A helical transmembrane segment spans residues 7-27 (YLSVAPVLTTLWFGSLAGLLI).

The protein belongs to the PsaJ family.

Its subcellular location is the plastid. The protein localises to the chloroplast thylakoid membrane. Its function is as follows. May help in the organization of the PsaE and PsaF subunits. The sequence is that of Photosystem I reaction center subunit IX from Nymphaea alba (White water-lily).